The following is a 365-amino-acid chain: MFEVNPVKFKIKELAERTQLLRGIFDYDAKNERLEEVTRELESSEVWNDPERAQALGKERASLEAVVKTIDDMDSGLEDVEGLLELAIEEEDEDTFNETSKELDYLESRLADLEFRRMFSGPQDASNCYLDIQSGSGGTEAQDWANMVLRMYLRWGEAHGFSPELMEVTDGDVAGIKGATIKFTGEYAFGWLRTETGVHRLVRKSPFDSSGRRHTSFCSVFVYPEIDDDITIDINPSDLRIDTYRASGAGGQHVNKTESAIRITHLPTNTVVQCQNDRSQHKNKDAAMKQLKAKLFELEMLKQNADKQAAEDAKSDIGWGSQIRSYVLDDARIKDLRTGVETRNTQAVLDGDLDKFIEASLKSGL.

Glutamine 252 is subject to N5-methylglutamine.

It belongs to the prokaryotic/mitochondrial release factor family. Post-translationally, methylated by PrmC. Methylation increases the termination efficiency of RF2.

It is found in the cytoplasm. Peptide chain release factor 2 directs the termination of translation in response to the peptide chain termination codons UGA and UAA. The sequence is that of Peptide chain release factor 2 from Shewanella baltica (strain OS223).